Here is a 524-residue protein sequence, read N- to C-terminus: Peptide chain release factor 3 (524 aa).

A tr-type G domain is found at 8-276 (NKRRTFAIIS…GFAKYAPAPE (269 aa)). Residues 17-24 (SHPDAGKT), 85-89 (DTPGH), and 139-142 (NKLD) each bind GTP.

The protein belongs to the TRAFAC class translation factor GTPase superfamily. Classic translation factor GTPase family. PrfC subfamily.

Its subcellular location is the cytoplasm. In terms of biological role, increases the formation of ribosomal termination complexes and stimulates activities of RF-1 and RF-2. It binds guanine nucleotides and has strong preference for UGA stop codons. It may interact directly with the ribosome. The stimulation of RF-1 and RF-2 is significantly reduced by GTP and GDP, but not by GMP. This chain is Peptide chain release factor 3, found in Hydrogenovibrio crunogenus (strain DSM 25203 / XCL-2) (Thiomicrospira crunogena).